A 312-amino-acid polypeptide reads, in one-letter code: Malate dehydrogenase (312 aa).

NAD(+) is bound by residues 7–13 and Asp-34; that span reads GAAGGIG. Substrate-binding residues include Arg-81 and Arg-87. NAD(+) contacts are provided by residues Asn-94 and 117–119; that span reads ITN. Substrate contacts are provided by Asn-119 and Arg-153. The active-site Proton acceptor is the His-177. Met-227 is a binding site for NAD(+).

The protein belongs to the LDH/MDH superfamily. MDH type 1 family. As to quaternary structure, homodimer.

It carries out the reaction (S)-malate + NAD(+) = oxaloacetate + NADH + H(+). Catalyzes the reversible oxidation of malate to oxaloacetate. In Klebsiella pneumoniae (strain 342), this protein is Malate dehydrogenase.